Reading from the N-terminus, the 280-residue chain is Lipase chaperone (280 aa).

The helical transmembrane segment at 5–22 (ALTIITIALGSLGAVYFL) threads the bilayer.

The protein belongs to the lipase chaperone family.

The protein resides in the cell inner membrane. In terms of biological role, may be involved in the folding of the extracellular lipase during its passage through the periplasm. The sequence is that of Lipase chaperone (lifO) from Vibrio vulnificus (strain CMCP6).